Reading from the N-terminus, the 185-residue chain is Peptidyl-tRNA hydrolase (185 aa).

A tRNA-binding site is contributed by Tyr14. His19 serves as the catalytic Proton acceptor. Residues Tyr65, Asn67, and Asn113 each coordinate tRNA.

This sequence belongs to the PTH family. As to quaternary structure, monomer.

The protein localises to the cytoplasm. The catalysed reaction is an N-acyl-L-alpha-aminoacyl-tRNA + H2O = an N-acyl-L-amino acid + a tRNA + H(+). In terms of biological role, hydrolyzes ribosome-free peptidyl-tRNAs (with 1 or more amino acids incorporated), which drop off the ribosome during protein synthesis, or as a result of ribosome stalling. Functionally, catalyzes the release of premature peptidyl moieties from peptidyl-tRNA molecules trapped in stalled 50S ribosomal subunits, and thus maintains levels of free tRNAs and 50S ribosomes. This is Peptidyl-tRNA hydrolase from Rickettsia typhi (strain ATCC VR-144 / Wilmington).